A 61-amino-acid polypeptide reads, in one-letter code: Large ribosomal subunit protein bL32 (61 aa).

The protein belongs to the bacterial ribosomal protein bL32 family.

This chain is Large ribosomal subunit protein bL32, found in Ehrlichia chaffeensis (strain ATCC CRL-10679 / Arkansas).